We begin with the raw amino-acid sequence, 83 residues long: uncharacterized protein (83 aa).

The protein belongs to the chlamydial CPn_0711/CT_665/TC_0036 family.

This is an uncharacterized protein from Chlamydia trachomatis serovar D (strain ATCC VR-885 / DSM 19411 / UW-3/Cx).